The chain runs to 95 residues: Co-chaperonin GroES (95 aa).

It belongs to the GroES chaperonin family. As to quaternary structure, heptamer of 7 subunits arranged in a ring. Interacts with the chaperonin GroEL.

The protein localises to the cytoplasm. Its function is as follows. Together with the chaperonin GroEL, plays an essential role in assisting protein folding. The GroEL-GroES system forms a nano-cage that allows encapsulation of the non-native substrate proteins and provides a physical environment optimized to promote and accelerate protein folding. GroES binds to the apical surface of the GroEL ring, thereby capping the opening of the GroEL channel. This chain is Co-chaperonin GroES, found in Bordetella petrii (strain ATCC BAA-461 / DSM 12804 / CCUG 43448).